Here is a 345-residue protein sequence, read N- to C-terminus: Tetraacyldisaccharide 4'-kinase (345 aa).

61-68 (TAGGTGKT) lines the ATP pocket.

It belongs to the LpxK family.

It catalyses the reaction a lipid A disaccharide + ATP = a lipid IVA + ADP + H(+). It functions in the pathway glycolipid biosynthesis; lipid IV(A) biosynthesis; lipid IV(A) from (3R)-3-hydroxytetradecanoyl-[acyl-carrier-protein] and UDP-N-acetyl-alpha-D-glucosamine: step 6/6. Functionally, transfers the gamma-phosphate of ATP to the 4'-position of a tetraacyldisaccharide 1-phosphate intermediate (termed DS-1-P) to form tetraacyldisaccharide 1,4'-bis-phosphate (lipid IVA). This Xanthomonas euvesicatoria pv. vesicatoria (strain 85-10) (Xanthomonas campestris pv. vesicatoria) protein is Tetraacyldisaccharide 4'-kinase.